Here is a 511-residue protein sequence, read N- to C-terminus: Cytochrome P450 monooxygenase prhD (511 aa).

An N-linked (GlcNAc...) asparagine glycan is attached at asparagine 7. Residues 10-30 form a helical membrane-spanning segment; sequence GNGMGLLIPLGLSWLIWTILL. Position 444 (cysteine 444) interacts with heme. Asparagine 502 carries an N-linked (GlcNAc...) asparagine glycan.

It belongs to the cytochrome P450 family. Heme serves as cofactor.

It is found in the membrane. Its pathway is secondary metabolite biosynthesis; terpenoid biosynthesis. In terms of biological role, cytochrome P450 monooxygenase; part of the gene cluster that mediates the biosynthesis of paraherquonin, a meroterpenoid with a unique, highly congested hexacyclic molecular architecture. The first step of the pathway is the synthesis of 3,5-dimethylorsellinic acid (DMOA) by the polyketide synthase prhL. Synthesis of DMOA is followed by farnesylation by the prenyltransferase prhE, methylesterification by the methyl-transferase prhM, epoxidation of the prenyl chain by the flavin-dependent monooxygenase prhF, and cyclization of the farnesyl moiety by the terpene cyclase prhH, to yield the tetracyclic intermediate, protoaustinoid A. The short chain dehydrogenase prhI then oxidizes the C-3 alcohol group of the terpene cyclase product to transform protoaustinoid A into protoaustinoid B. The FAD-binding monooxygenase prhJ catalyzes the oxidation of protoaustinoid B into preaustinoid A which is further oxidized into preaustinoid A1 by FAD-binding monooxygenase phrK. Finally, prhA leads to berkeleydione via the berkeleyone B intermediate. PrhA is a multifunctional dioxygenase that first desaturates at C5-C6 to form berkeleyone B, followed by rearrangement of the A/B-ring to form the cycloheptadiene moiety in berkeleydione. Berkeleydione serves as the key intermediate for the biosynthesis of paraherquonin as well as many other meroterpenoids. The cytochrome P450 monooxygenases prhB, prhD, and prhN, as well as the isomerase prhC, are probably involved in the late stage of paraherquonin biosynthesis, after the production of berkeleydione. Especially prhC might be a multifunctional enzyme that catalyzes the D-ring expansion via intramolecular methoxy rearrangement, as well as the hydrolysis of the expanded D-ring. The chain is Cytochrome P450 monooxygenase prhD from Penicillium brasilianum.